Reading from the N-terminus, the 267-residue chain is Integral membrane protein 2C (267 aa).

Thr37 carries the phosphothreonine modification. The chain crosses the membrane as a helical; Signal-anchor for type II membrane protein span at residues 55 to 75 (VGGVCYLSMGMVVLLMGLVFA). Residues 136–230 (FGGGDPADII…LCNGKDTYRL (95 aa)) form the BRICHOS domain. Cys163 and Cys222 form a disulfide bridge. Asn169 is a glycosylation site (N-linked (GlcNAc...) asparagine).

Belongs to the ITM2 family. In terms of assembly, interacts with BACE1. Interacts with APP. Interacts with STMN2. Type I membrane-bound, as well as soluble, furin has a pre-eminent role in ITM2C proteolytic processing. PCSK7 and PCSK5 may also be involved although to a lesser extent. The soluble form of PCSK7 is incapable of processing ITM2C. Fails to undergo shedding by ADAM10 and intramembrane cleavage by SPPL2B.

The protein localises to the lysosome membrane. It is found in the cell membrane. Its function is as follows. Negative regulator of amyloid-beta peptide production. May inhibit the processing of APP by blocking its access to alpha- and beta-secretase. Binding to the beta-secretase-cleaved APP C-terminal fragment is negligible, suggesting that ITM2C is a poor gamma-secretase cleavage inhibitor. May play a role in TNF-induced cell death and neuronal differentiation. In Macaca fascicularis (Crab-eating macaque), this protein is Integral membrane protein 2C (ITM2C).